Here is a 373-residue protein sequence, read N- to C-terminus: Queuine tRNA-ribosyltransferase (373 aa).

The Proton acceptor role is filled by Asp-91. Substrate is bound by residues 91-95 (DSGGF), Asp-145, and Gln-187. An RNA binding region spans residues 245–251 (GVGTPED). Asp-264 (nucleophile) is an active-site residue. Residues 269 to 273 (TRNAR) form an RNA binding; important for wobble base 34 recognition region. Residues Cys-302, Cys-304, Cys-307, and His-333 each contribute to the Zn(2+) site.

It belongs to the queuine tRNA-ribosyltransferase family. As to quaternary structure, homodimer. Within each dimer, one monomer is responsible for RNA recognition and catalysis, while the other monomer binds to the replacement base PreQ1. The cofactor is Zn(2+).

The enzyme catalyses 7-aminomethyl-7-carbaguanine + guanosine(34) in tRNA = 7-aminomethyl-7-carbaguanosine(34) in tRNA + guanine. It participates in tRNA modification; tRNA-queuosine biosynthesis. Catalyzes the base-exchange of a guanine (G) residue with the queuine precursor 7-aminomethyl-7-deazaguanine (PreQ1) at position 34 (anticodon wobble position) in tRNAs with GU(N) anticodons (tRNA-Asp, -Asn, -His and -Tyr). Catalysis occurs through a double-displacement mechanism. The nucleophile active site attacks the C1' of nucleotide 34 to detach the guanine base from the RNA, forming a covalent enzyme-RNA intermediate. The proton acceptor active site deprotonates the incoming PreQ1, allowing a nucleophilic attack on the C1' of the ribose to form the product. After dissociation, two additional enzymatic reactions on the tRNA convert PreQ1 to queuine (Q), resulting in the hypermodified nucleoside queuosine (7-(((4,5-cis-dihydroxy-2-cyclopenten-1-yl)amino)methyl)-7-deazaguanosine). The sequence is that of Queuine tRNA-ribosyltransferase from Syntrophobacter fumaroxidans (strain DSM 10017 / MPOB).